Here is a 304-residue protein sequence, read N- to C-terminus: Secreted mono- and diacylglycerol lipase MDL4 (304 aa).

A signal peptide spans 1-19 (MRFGGVVSLVLGFIVSVLA). Cys-55 and Cys-297 form a disulfide bridge. N-linked (GlcNAc...) asparagine glycosylation is found at Asn-102 and Asn-161. The Nucleophile role is filled by Ser-171. Asp-228 is an active-site residue. A glycan (N-linked (GlcNAc...) asparagine) is linked at Asn-253. Residue His-281 is part of the active site.

It belongs to the AB hydrolase superfamily. Lipase family. Class 3 subfamily.

Its subcellular location is the secreted. It localises to the cell wall. It carries out the reaction a monoacylglycerol + H2O = glycerol + a fatty acid + H(+). It catalyses the reaction a diacylglycerol + H2O = a monoacylglycerol + a fatty acid + H(+). Secreted lipase involved in Dandruff and seborrheic dermatitis (D/SD) probably via lipase-mediated breakdown of sebaceous lipids and release of irritating free fatty acids. Shows activity against monoglyceride and diglyceride substrates, but not triglyceride substrates and does not exhibit regio-selective production of diacylglycerols. Cleaves oleic acid from 1,2 isomers of diolein on both the 1 and the 2 position of the glycerol backbone, resulting mainly in free fatty acids but no monoolein is detected. Shows activity on monoolein and liberates mostly free fatty acids, but can also perform the reverse reaction and produce diolein. The sequence is that of Secreted mono- and diacylglycerol lipase MDL4 from Malassezia globosa (strain ATCC MYA-4612 / CBS 7966) (Dandruff-associated fungus).